Consider the following 427-residue polypeptide: Tumor necrosis factor receptor superfamily member 16 (427 aa).

An N-terminal signal peptide occupies residues 1–28; that stretch reads MGAGATGRAMDGPRLLLLLLLGVSLGGA. At 29–250 the chain is on the extracellular side; that stretch reads KEACPTGLYT…PVVTRGTTDN (222 aa). 4 TNFR-Cys repeats span residues 31–64, 66–107, 108–146, and 148–188; these read ACPT…QTVC, PCLD…DAVC, RCAY…NTVC, and ECPD…DAEC. Intrachain disulfides connect cysteine 32–cysteine 43, cysteine 44–cysteine 57, cysteine 47–cysteine 64, cysteine 67–cysteine 83, cysteine 86–cysteine 99, cysteine 89–cysteine 107, cysteine 109–cysteine 122, cysteine 125–cysteine 138, cysteine 128–cysteine 146, cysteine 149–cysteine 164, cysteine 167–cysteine 180, and cysteine 170–cysteine 188. The N-linked (GlcNAc...) asparagine glycan is linked to asparagine 60. The disordered stretch occupies residues 194-219; it reads RWITRSTPPEGSDSTAPSTQEPEAPP. The segment covering 197-214 has biased composition (polar residues); it reads TRSTPPEGSDSTAPSTQE. A helical membrane pass occupies residues 251–272; the sequence is LIPVYCSILAAVVVGLVAYIAF. Residues 273–427 are Cytoplasmic-facing; the sequence is KRWNSCKQNK…CSESTATSPV (155 aa). 2 stretches are compositionally biased toward polar residues: residues 281-291 and 305-326; these read NKQGANSRPVN and SGIS…TASG. The tract at residues 281 to 338 is disordered; the sequence is NKQGANSRPVNQTPPPEGEKLHSDSGISVDSQSLHDQQPHTQTASGQALKGDGGLYSS. Phosphoserine is present on serine 311. A mediates interaction with KIDINS220 region spans residues 326–341; it reads GQALKGDGGLYSSLPP. The Death domain maps to 344-421; that stretch reads REEVEKLLNG…DLVESLCSES (78 aa).

In terms of assembly, homodimer; disulfide-linked. Heterodimer with SORCS2. The extracellular domains of the heterodimer bind NGF. The cytoplasmic region of the heterodimer binds TRIO. NGF binding mediates dissociation of TRIO from the receptor complex. Interacts with RTN4R. Interacts with TRAF2, TRAF4, TRAF6, PTPN13 and RANBP9. Interacts through TRAF6 with SQSTM1 which bridges NGFR to NTRK1. Interacts with BEX1. Interacts with BEX3. Interacts with KIDINS220 and NTRK1. Can form a ternary complex with NTRK1 and KIDINS220 and this complex is affected by the expression levels of KIDINS220. An increase in KIDINS220 expression leads to a decreased association of NGFR and NTRK1. Interacts with NTRK2; may regulate the ligand specificity of the NTRK2 receptor. Interacts (via death domain) with RAB31. Interacts with LINGO1. Interacts with NRADD. Interacts with MAGED1; the interaction antagonizes the association NGFR:NTRK1. Interacts (via death domain) with ARHGDIA and RIPK2. Interacts with BFAR. N- and O-glycosylated. In terms of processing, O-linked glycans consist of Gal(1-3)GalNAc core elongated by 1 or 2 NeuNAc. Post-translationally, phosphorylated on serine residues.

It is found in the cell membrane. The protein resides in the cytoplasm. Its subcellular location is the perikaryon. It localises to the cell projection. The protein localises to the growth cone. It is found in the dendritic spine. Functionally, low affinity receptor which can bind to NGF, BDNF, NTF3, and NTF4. Forms a heterodimeric receptor with SORCS2 that binds the precursor forms of NGF, BDNF and NTF3 with high affinity, and has much lower affinity for mature NGF and BDNF. Plays an important role in differentiation and survival of specific neuronal populations during development. Can mediate cell survival as well as cell death of neural cells. Plays a role in the inactivation of RHOA. Plays a role in the regulation of the translocation of GLUT4 to the cell surface in adipocytes and skeletal muscle cells in response to insulin, probably by regulating RAB31 activity, and thereby contributes to the regulation of insulin-dependent glucose uptake. Necessary for the circadian oscillation of the clock genes BMAL1, PER1, PER2 and NR1D1 in the suprachiasmatic nucleus (SCmgetaN) of the brain and in liver and of the genes involved in glucose and lipid metabolism in the liver. Together with BFAR negatively regulates NF-kappa-B and JNK-related signaling pathways. In Homo sapiens (Human), this protein is Tumor necrosis factor receptor superfamily member 16 (NGFR).